The following is a 621-amino-acid chain: Lethal(3)malignant brain tumor-like protein 4 (621 aa).

Positions 1–48 (MRQPNRKRKLSLESTERMNQDRCTGQTEEEKKPGEVTTPSKRESSVTT) are disordered. Composition is skewed to basic and acidic residues over residues 10 to 20 (LSLESTERMNQ) and 28 to 44 (EEEKKPGEVTTPSKRES). MBT repeat units lie at residues 52–152 (WSWE…LHIP), 160–260 (FVWM…LVAP), and 269–364 (FSWT…LEVP). The segment at 370 to 414 (VKILPGQPACPTPGCRGIGHIRGPRYAGHHSAFGCPYSDVNLKRE) adopts a CCHHC-type zinc-finger fold. Residues Cys379, Cys384, His398, and Cys404 each contribute to the Zn(2+) site. In terms of domain architecture, SAM spans 543-607 (WTVDEVAEFV…YNSILMFRNS (65 aa)).

The protein resides in the nucleus. In terms of biological role, putative Polycomb group (PcG) protein. PcG proteins maintain the transcriptionally repressive state of genes, probably via a modification of chromatin, rendering it heritably changed in its expressibility. The polypeptide is Lethal(3)malignant brain tumor-like protein 4 (L3mbtl4) (Mus musculus (Mouse)).